We begin with the raw amino-acid sequence, 290 residues long: Ig delta chain C region membrane-bound form (290 aa).

An Ig-like 1 domain is found at Pro-5–Thr-105. A disulfide bridge connects residues Cys-26 and Cys-78. 2 N-linked (GlcNAc...) asparagine glycosylation sites follow: Asn-58 and Asn-75. A disordered region spans residues Pro-89–Lys-111. Polar residues predominate over residues Trp-96–Lys-111. Residues Asn-112, Asn-135, and Asn-227 are each glycosylated (N-linked (GlcNAc...) asparagine). Residues Pro-133–Ala-233 enclose the Ig-like 2 domain. A helical transmembrane segment spans residues Gly-262–Leu-279. Over Tyr-280 to Lys-290 the chain is Cytoplasmic.

As to expression, cell lines producing IgD contain several mRNA species for Ig delta chains. In plasmacytomas, the secreted form is the major component, and the membrane-bound form is a minor component. In spleen, however, the membrane-bound form is the major component. These two forms differ in their C-terminal segments.

The protein localises to the cell membrane. The polypeptide is Ig delta chain C region membrane-bound form (Mus musculus (Mouse)).